Reading from the N-terminus, the 394-residue chain is Elongation factor Tu 2 (394 aa).

One can recognise a tr-type G domain in the interval 10-204; the sequence is KPHVNVGTIG…ALDSYIPEPE (195 aa). A G1 region spans residues 19–26; sequence GHVDHGKT. 19-26 contacts GTP; sequence GHVDHGKT. Position 26 (T26) interacts with Mg(2+). Residues 60–64 form a G2 region; sequence GITIN. The segment at 81–84 is G3; that stretch reads DCPG. GTP-binding positions include 81 to 85 and 136 to 139; these read DCPGH and NKCD. The tract at residues 136-139 is G4; sequence NKCD. The tract at residues 174 to 176 is G5; the sequence is SAL.

Belongs to the TRAFAC class translation factor GTPase superfamily. Classic translation factor GTPase family. EF-Tu/EF-1A subfamily. As to quaternary structure, monomer.

The protein resides in the cytoplasm. The catalysed reaction is GTP + H2O = GDP + phosphate + H(+). GTP hydrolase that promotes the GTP-dependent binding of aminoacyl-tRNA to the A-site of ribosomes during protein biosynthesis. The protein is Elongation factor Tu 2 of Shewanella loihica (strain ATCC BAA-1088 / PV-4).